The primary structure comprises 428 residues: Enolase 1 (428 aa).

Gln167 contributes to the (2R)-2-phosphoglycerate binding site. Glu209 serves as the catalytic Proton donor. 3 residues coordinate Mg(2+): Asp246, Glu288, and Asp315. Lys340, Arg369, Ser370, and Lys391 together coordinate (2R)-2-phosphoglycerate. Lys340 acts as the Proton acceptor in catalysis.

It belongs to the enolase family. Component of the RNA degradosome, a multiprotein complex involved in RNA processing and mRNA degradation. Requires Mg(2+) as cofactor.

Its subcellular location is the cytoplasm. It is found in the secreted. The protein resides in the cell surface. It carries out the reaction (2R)-2-phosphoglycerate = phosphoenolpyruvate + H2O. It participates in carbohydrate degradation; glycolysis; pyruvate from D-glyceraldehyde 3-phosphate: step 4/5. Its function is as follows. Catalyzes the reversible conversion of 2-phosphoglycerate (2-PG) into phosphoenolpyruvate (PEP). It is essential for the degradation of carbohydrates via glycolysis. In Pseudomonas syringae pv. tomato (strain ATCC BAA-871 / DC3000), this protein is Enolase 1.